The following is a 644-amino-acid chain: Exoribonuclease 2 (644 aa).

The region spanning 189 to 516 is the RNB domain; sequence REDLTALDFV…NHRLLKAVIK (328 aa). In terms of domain architecture, S1 motif spans 561 to 643; the sequence is DTRFAAEIVD…ETRSIIARPV (83 aa).

This sequence belongs to the RNR ribonuclease family. RNase II subfamily.

Its subcellular location is the cytoplasm. The enzyme catalyses Exonucleolytic cleavage in the 3'- to 5'-direction to yield nucleoside 5'-phosphates.. Its function is as follows. Involved in mRNA degradation. Hydrolyzes single-stranded polyribonucleotides processively in the 3' to 5' direction. The protein is Exoribonuclease 2 of Escherichia coli O17:K52:H18 (strain UMN026 / ExPEC).